The chain runs to 307 residues: Tropinone reductase homolog At2g29340 (307 aa).

Position 13-37 (13-37 (LVTGGASGIGYAIVEELAGFGARIH)) interacts with NADP(+). Ser-146 contacts substrate. Tyr-159 acts as the Proton acceptor in catalysis.

This sequence belongs to the short-chain dehydrogenases/reductases (SDR) family. SDR65C subfamily.

In Arabidopsis thaliana (Mouse-ear cress), this protein is Tropinone reductase homolog At2g29340.